The primary structure comprises 275 residues: uncharacterized protein (275 aa).

D45 contacts NADPH. Active-site proton donor residues include Y50 and H111. NADPH contacts are provided by S139, Q162, L191, K196, S232, S233, and R237.

The protein belongs to the aldo/keto reductase family.

It is found in the cytoplasm. Its subcellular location is the nucleus. This is an uncharacterized protein from Schizosaccharomyces pombe (strain 972 / ATCC 24843) (Fission yeast).